The following is a 312-amino-acid chain: MKFEHRSVMPREVRDGLDLKPGETCVDCTLGGSGHAVTSLAAVLPNGRLIGIDQDLDAIENAHRVFADDMANVSIFHDNFSHLPAILDSLGIKGVDGILLDLGLSLHQLRKGQRGFSFKGDEPLDMRMDMRTALTAADLVNTLEERALVDIFFKYGEEKMSRKIARAIVRQRASAPITRNCELAEIVRAAIPAKIVHQQKIHPATRVFQALRISVNRELEQLERFLETFVDFLNPGGRICIISFHSLEDRMVKRRFRALEQGCTCPRDFPECVCGFKPRLKSVTKRAVMPTPEEIEINPMARSARLRVAWRV.

S-adenosyl-L-methionine-binding positions include 33–35 (SGH), Asp-53, Phe-80, Asp-101, and Gln-108.

It belongs to the methyltransferase superfamily. RsmH family.

It localises to the cytoplasm. The enzyme catalyses cytidine(1402) in 16S rRNA + S-adenosyl-L-methionine = N(4)-methylcytidine(1402) in 16S rRNA + S-adenosyl-L-homocysteine + H(+). Specifically methylates the N4 position of cytidine in position 1402 (C1402) of 16S rRNA. This is Ribosomal RNA small subunit methyltransferase H from Desulforapulum autotrophicum (strain ATCC 43914 / DSM 3382 / VKM B-1955 / HRM2) (Desulfobacterium autotrophicum).